Consider the following 270-residue polypeptide: Glutamate 5-kinase (270 aa).

Lys-17 contacts ATP. Substrate contacts are provided by Ser-57, Asp-144, and Asn-160. Residues 180–181 and 222–228 each bind ATP; these read SD and TGGMTSK.

This sequence belongs to the glutamate 5-kinase family.

It is found in the cytoplasm. It carries out the reaction L-glutamate + ATP = L-glutamyl 5-phosphate + ADP. It functions in the pathway amino-acid biosynthesis; L-proline biosynthesis; L-glutamate 5-semialdehyde from L-glutamate: step 1/2. In terms of biological role, catalyzes the transfer of a phosphate group to glutamate to form L-glutamate 5-phosphate. In Lactococcus lactis subsp. cremoris (strain SK11), this protein is Glutamate 5-kinase.